The primary structure comprises 430 residues: Asparagine--tRNA ligase (430 aa).

The protein belongs to the class-II aminoacyl-tRNA synthetase family. In terms of assembly, homodimer.

The protein localises to the cytoplasm. It carries out the reaction tRNA(Asn) + L-asparagine + ATP = L-asparaginyl-tRNA(Asn) + AMP + diphosphate + H(+). The polypeptide is Asparagine--tRNA ligase (Shouchella clausii (strain KSM-K16) (Alkalihalobacillus clausii)).